Reading from the N-terminus, the 682-residue chain is Glutamine--fructose-6-phosphate aminotransferase [isomerizing] 2 (682 aa).

Catalysis depends on Cys-2, which acts as the For GATase activity. One can recognise a Glutamine amidotransferase type-2 domain in the interval Cys-2–Gly-288. At Ser-244 the chain carries Phosphoserine. 2 SIS domains span residues His-360–Ser-499 and Leu-531–Pro-672. Residues Thr-377–Ser-378, Ser-422–Ser-424, Thr-427, and His-578 each bind substrate.

The enzyme catalyses D-fructose 6-phosphate + L-glutamine = D-glucosamine 6-phosphate + L-glutamate. The protein operates within nucleotide-sugar biosynthesis; UDP-N-acetyl-alpha-D-glucosamine biosynthesis; alpha-D-glucosamine 6-phosphate from D-fructose 6-phosphate: step 1/1. Its function is as follows. Controls the flux of glucose into the hexosamine pathway. Most likely involved in regulating the availability of precursors for N- and O-linked glycosylation of proteins. This chain is Glutamine--fructose-6-phosphate aminotransferase [isomerizing] 2 (GFPT2), found in Bos taurus (Bovine).